The following is a 165-amino-acid chain: Ribosome maturation factor RimM (165 aa).

One can recognise a PRC barrel domain in the interval 94–165 (EDEFYIADLN…YVVLNYQREI (72 aa)).

The protein belongs to the RimM family. In terms of assembly, binds ribosomal protein uS19.

It is found in the cytoplasm. Functionally, an accessory protein needed during the final step in the assembly of 30S ribosomal subunit, possibly for assembly of the head region. Essential for efficient processing of 16S rRNA. May be needed both before and after RbfA during the maturation of 16S rRNA. It has affinity for free ribosomal 30S subunits but not for 70S ribosomes. This Rickettsia felis (strain ATCC VR-1525 / URRWXCal2) (Rickettsia azadi) protein is Ribosome maturation factor RimM.